The following is a 63-amino-acid chain: Small ribosomal subunit protein bS21 (63 aa).

Belongs to the bacterial ribosomal protein bS21 family.

The polypeptide is Small ribosomal subunit protein bS21 (Syntrophus aciditrophicus (strain SB)).